We begin with the raw amino-acid sequence, 599 residues long: NADH-ubiquinone oxidoreductase chain 5 (599 aa).

16 helical membrane-spanning segments follow: residues 1-21 (MLELWGVLSLTSLGVMVIFLF), 28-48 (FAESVKYAGYMNAVLLSILLM), 81-101 (CFFVVGLYVTWNILMFSFYYM), 115-135 (GLFLIAMLLLVSAESLFQLLI), 171-191 (GDIGLLIMLMWSLVTLGDWSF), 193-213 (GLYALDFVNTFFLLGVVLAAA), 233-253 (TPVSSLLHSSTMVVAGVFLLI), 265-285 (IQLMVFFLGTMTTLFSAICAL), 302-322 (LGLMVTVVAGAGAPQLAFLHI), 323-343 (CMHAFFKAMLFMCSGGFIHGL), 363-383 (SVCFFIGSAALMGVPFLAGFF), 398-420 (NSWAVGLVLIATSFTAAYSVRLL), 455-475 (VIAGVVFIYFLSPNQISCLSL), 481-501 (LAAVFVTLVGGLIAWDVVNLL), 510-530 (IPELAFEAQVGFYPLIMHKLI), and 577-597 (LIKMYIAVMVMMGGLILGIMI).

This sequence belongs to the complex I subunit 5 family.

Its subcellular location is the mitochondrion inner membrane. The catalysed reaction is a ubiquinone + NADH + 5 H(+)(in) = a ubiquinol + NAD(+) + 4 H(+)(out). Functionally, core subunit of the mitochondrial membrane respiratory chain NADH dehydrogenase (Complex I) that is believed to belong to the minimal assembly required for catalysis. Complex I functions in the transfer of electrons from NADH to the respiratory chain. The immediate electron acceptor for the enzyme is believed to be ubiquinone. The chain is NADH-ubiquinone oxidoreductase chain 5 (ND5) from Branchiostoma floridae (Florida lancelet).